A 651-amino-acid polypeptide reads, in one-letter code: Mitogen-activated protein kinase kinase kinase 2 (651 aa).

The 263-residue stretch at 68-330 folds into the Protein kinase domain; that stretch reads WRKGQLIGRG…ASELLKHPFV (263 aa). ATP-binding positions include 74 to 82 and K97; that span reads IGRGAFGTV. Residues 105-130 are a coiled coil; the sequence is CASKEKTQAHIQELEEEVKLLKNLSH. Glycyl lysine isopeptide (Lys-Gly) (interchain with G-Cter in ubiquitin) cross-links involve residues K108 and K110. D196 serves as the catalytic Proton acceptor. 3 disordered regions span residues 460-483, 537-601, and 618-651; these read GNGE…DENE, RGFL…VALS, and KRRE…SPGK. Residues 464–477 show a composition bias toward basic and acidic residues; that stretch reads TETKVSMEVDHPSY. Residues 570–599 show a composition bias toward polar residues; that stretch reads SPESGNSSGAPKNSNASAGAEQESNSQSVA. Positions 605-628 form a coiled coil; it reads RKWKEELDQELERKRREITRQAGM.

This sequence belongs to the protein kinase superfamily. STE Ser/Thr protein kinase family. MAP kinase kinase kinase subfamily. In terms of tissue distribution, expressed in roots and flowers.

It localises to the cytoplasm. The protein resides in the cytoskeleton. The enzyme catalyses L-seryl-[protein] + ATP = O-phospho-L-seryl-[protein] + ADP + H(+). It carries out the reaction L-threonyl-[protein] + ATP = O-phospho-L-threonyl-[protein] + ADP + H(+). Functionally, involved in cortical microtubules organization and stabilization by regulating the phosphorylation state of microtubule-associated proteins such as MAP65-1. This chain is Mitogen-activated protein kinase kinase kinase 2 (ANP2), found in Arabidopsis thaliana (Mouse-ear cress).